A 429-amino-acid polypeptide reads, in one-letter code: Adenylosuccinate synthetase (429 aa).

GTP-binding positions include 12–18 (GDEGKGK) and 40–42 (GHT). The active-site Proton acceptor is Asp-13. Mg(2+)-binding residues include Asp-13 and Gly-40. IMP-binding positions include 13–16 (DEGK), 38–41 (NAGH), Thr-128, Arg-142, Gln-223, Thr-238, and Arg-302. His-41 functions as the Proton donor in the catalytic mechanism. Position 298-304 (298-304 (VNTGRPR)) interacts with substrate. GTP-binding positions include Arg-304, 330-332 (KLD), and 412-414 (GVG).

This sequence belongs to the adenylosuccinate synthetase family. In terms of assembly, homodimer. Requires Mg(2+) as cofactor.

The protein resides in the cytoplasm. The enzyme catalyses IMP + L-aspartate + GTP = N(6)-(1,2-dicarboxyethyl)-AMP + GDP + phosphate + 2 H(+). The protein operates within purine metabolism; AMP biosynthesis via de novo pathway; AMP from IMP: step 1/2. Functionally, plays an important role in the de novo pathway of purine nucleotide biosynthesis. Catalyzes the first committed step in the biosynthesis of AMP from IMP. In Micrococcus luteus (strain ATCC 4698 / DSM 20030 / JCM 1464 / CCM 169 / CCUG 5858 / IAM 1056 / NBRC 3333 / NCIMB 9278 / NCTC 2665 / VKM Ac-2230) (Micrococcus lysodeikticus), this protein is Adenylosuccinate synthetase.